The following is a 306-amino-acid chain: D-alanine--D-alanine ligase (306 aa).

Residues 102–300 form the ATP-grasp domain; sequence KIIAANAGVC…YGDIVQWMVE (199 aa). 128 to 183 contributes to the ATP binding site; it reads PMEPPYVIKPVCEGSSFGVVIVQENEAVPPHNIGGSEWGYADEVMVEKYIPGRELT. Positions 253, 267, and 269 each coordinate Mg(2+).

Belongs to the D-alanine--D-alanine ligase family. Mg(2+) serves as cofactor. It depends on Mn(2+) as a cofactor.

It is found in the cytoplasm. The enzyme catalyses 2 D-alanine + ATP = D-alanyl-D-alanine + ADP + phosphate + H(+). It participates in cell wall biogenesis; peptidoglycan biosynthesis. Its function is as follows. Cell wall formation. The polypeptide is D-alanine--D-alanine ligase (Bartonella tribocorum (strain CIP 105476 / IBS 506)).